An 880-amino-acid chain; its full sequence is MSTVEPNVYDPHQVETSAQQFWDATRAFQVDENSEKPKFYCLSMLPYPSGALHMGHVRNYTISDVVSRYKRMTGHNVLQPMGWDAFGLPAENAAIKNKTAPAKWTYANIAHMRAQLKSLGYAIDWSREFATCTPDYYVHEQRMFTRLMRKGLAYRRNAVVNWDPIDQTVLANEQVIDGRGWRSGAVVEKREIPQWFLRITDYAQELLDGLDQLDGWPDSVKTMQRNWIGRSEGLEIQFDVRDTNGAALDPLRVFTTRPDTLMGVTFVSIAAEHPLALHAAKSNPELAALLETLKHGGVSEAELETQEKRGMAIGLTAVHPISGEQVPVWVANFVLMGYGTGAVMAVPGHDQRDFEFANKYGLPIVQVVKLREPRNDDEQRWDATEWRDWYTDKSRELELINSAEFDGLDFGGAFEALAERFERKGQGQRRVNYRLRDWGVSRQRYWGCPIPVIYCPKCGAVPVPEDQLPVVLPENVEFAGTGSPIKTEPTWRQTTCPDCGGPAERETDTFDTFMESSWYVARYTSPNAREMVDRRANYWMPADLYVGGIEHAILHLMYFRFYHKLMRDARLVDSDEPVTNLLTQGMVIADTFYRDADNGGKDWINPADVEIQRDERGRVTGAVLIADGQPVHIGGTEKMSKSKNNGVDPQSMVAKYGADTVRLFSMFAAPPEQSLEWNEAGVDGMARFMRRLWAQVHKHVGEGAAVALDVAALSAEQKAIRRKTHETIGKVSDDYGRRHSFNTAIAAVMELSNALAKFDDASDQGRAVRQEALEAMVLLLNPITPHASHALWQVLGRGETLLENVAFPQADVSALVRDALTLAVQINGKLRGTIDVAADAAREQIEALAQAEPNAAKFLDGLSVRKIIIVPGKIVNIVAG.

The 'HIGH' region signature appears at P46 to H56. The tract at residues S483–P502 is disordered. The 'KMSKS' region motif lies at K638–S642. K641 is an ATP binding site.

This sequence belongs to the class-I aminoacyl-tRNA synthetase family.

It localises to the cytoplasm. The enzyme catalyses tRNA(Leu) + L-leucine + ATP = L-leucyl-tRNA(Leu) + AMP + diphosphate. The chain is Leucine--tRNA ligase from Xanthomonas oryzae pv. oryzae (strain PXO99A).